The sequence spans 344 residues: GTPase Obg (344 aa).

The 159-residue stretch at 1-159 (MKFLDEAKVY…MWLILRLKLI (159 aa)) folds into the Obg domain. One can recognise an OBG-type G domain in the interval 160-327 (ADAGLVGLPN…ALRAIQAQLD (168 aa)). Residues 166 to 173 (GLPNAGKS), 191 to 195 (FTTLH), 212 to 215 (DIPG), 279 to 282 (SKAD), and 308 to 310 (SAA) contribute to the GTP site. Residues Ser-173 and Thr-193 each coordinate Mg(2+).

It belongs to the TRAFAC class OBG-HflX-like GTPase superfamily. OBG GTPase family. Monomer. Mg(2+) is required as a cofactor.

It is found in the cytoplasm. Its function is as follows. An essential GTPase which binds GTP, GDP and possibly (p)ppGpp with moderate affinity, with high nucleotide exchange rates and a fairly low GTP hydrolysis rate. Plays a role in control of the cell cycle, stress response, ribosome biogenesis and in those bacteria that undergo differentiation, in morphogenesis control. The sequence is that of GTPase Obg from Methylorubrum populi (strain ATCC BAA-705 / NCIMB 13946 / BJ001) (Methylobacterium populi).